The chain runs to 588 residues: Adenine deaminase (588 aa).

Belongs to the metallo-dependent hydrolases superfamily. Adenine deaminase family. In terms of assembly, homodimer. Mn(2+) is required as a cofactor.

The enzyme catalyses adenine + H2O + H(+) = hypoxanthine + NH4(+). The sequence is that of Adenine deaminase from Escherichia coli O45:K1 (strain S88 / ExPEC).